The sequence spans 805 residues: MRISTTWLRDYLKLDIPADELAEKIERTAVEVDGVIRPSEGLKKVVVGHVLTCEPHPDSDHLHVCQVDVGESEPLQIVCGAPNVAAGEKVIVALPNSWIGGHTKIKKSKMRGVPSNGMLCALDELGFDEKLVPKEVADGIFILPDDATPGDPVFSYLGMDDEIIDMSVTPNRGDMLSMNGTAHELAAIYDQQPTMPKVDLYEDATTVAADDLHVAVAADEHDVPMYKMRLIKNVTIKPSPLWLQIRIWNAGMRPINNVVDATNYILMQYGQPLHAFDFDQLNDGQINVRLAKAGEHLTTLDGEDRELLTSDLLICSGDQPICLAGTMGGLATEVTDQTTTIALEGAVFDAVKIRKTAHNHDLHSEASMRYERGIDHGMTATALDAAAAMIAELGDGQVASGMVIGRDEDVQPTTVTIDLARINHVLGTELSLDTVSDIFKRLDFPTVVANETFTVTVPSRRWDIHIPADLIEEIARLYGYDNLPATLPTGQPTIGKLNETQQVIRDSRKLMESAGLTQAISYSLTTETKSKAFALHASDVTKLDFPMSSERTTLRLSLVSGLLDDLAYNNARKEHNVALYEEGRVFYSQPEQVRPKEIEHIAGAITGSMVPKSWGVAEQPVDFFQIKGIVAGYLKSLALQDAVSYVATAEHPEMHPGRTADIYVGDQLVGFVGEVHPTTAKAYKIRETYVFELDLTALIALPKARQQYQPISKFPSITRDVAMLIDDDVTNATVVALINKKGGAHLRHVQLFDVYNGSHVPAGKKSLAYTLTYQDQNATLVDDDVTTAFEKVLTALTDELGAEIR.

The tRNA-binding domain occupies 39–154 (SEGLKKVVVG…DDATPGDPVF (116 aa)). In terms of domain architecture, B5 spans 410–485 (VQPTTVTIDL…RLYGYDNLPA (76 aa)). Mg(2+) contacts are provided by Asp463, Asp469, Glu472, and Glu473. The FDX-ACB domain occupies 712-805 (SKFPSITRDV…LTDELGAEIR (94 aa)).

This sequence belongs to the phenylalanyl-tRNA synthetase beta subunit family. Type 1 subfamily. Tetramer of two alpha and two beta subunits. It depends on Mg(2+) as a cofactor.

It is found in the cytoplasm. The enzyme catalyses tRNA(Phe) + L-phenylalanine + ATP = L-phenylalanyl-tRNA(Phe) + AMP + diphosphate + H(+). In Lactiplantibacillus plantarum (strain ATCC BAA-793 / NCIMB 8826 / WCFS1) (Lactobacillus plantarum), this protein is Phenylalanine--tRNA ligase beta subunit.